Here is a 436-residue protein sequence, read N- to C-terminus: UDP-N-acetylglucosamine 1-carboxyvinyltransferase 1 (436 aa).

Position 22–23 (K22–N23) interacts with phosphoenolpyruvate. R93 contacts UDP-N-acetyl-alpha-D-glucosamine. C117 serves as the catalytic Proton donor. C117 carries the post-translational modification 2-(S-cysteinyl)pyruvic acid O-phosphothioketal. UDP-N-acetyl-alpha-D-glucosamine is bound by residues R122–Q126, D306, and V328.

The protein belongs to the EPSP synthase family. MurA subfamily.

The protein localises to the cytoplasm. It catalyses the reaction phosphoenolpyruvate + UDP-N-acetyl-alpha-D-glucosamine = UDP-N-acetyl-3-O-(1-carboxyvinyl)-alpha-D-glucosamine + phosphate. It participates in cell wall biogenesis; peptidoglycan biosynthesis. In terms of biological role, cell wall formation. Adds enolpyruvyl to UDP-N-acetylglucosamine. Essential for cell growth. This Bacillus subtilis (strain 168) protein is UDP-N-acetylglucosamine 1-carboxyvinyltransferase 1.